An 89-amino-acid chain; its full sequence is Mitochondrial import inner membrane translocase subunit Tim9 (89 aa).

At Ala-2 the chain carries N-acetylalanine. Positions 28-52 match the Twin CX3C motif motif; the sequence is CFLDCVKDFTTREVKPEEVTCSEHC. 2 cysteine pairs are disulfide-bonded: Cys-28–Cys-52 and Cys-32–Cys-48.

Belongs to the small Tim family. As to quaternary structure, heterohexamer; composed of 3 copies of TIMM9 and 3 copies of TIMM10/TIM10A, named soluble 70 kDa complex. The complex forms a 6-bladed alpha-propeller structure and associates with the TIMM22 component of the TIM22 complex. Interacts with multi-pass transmembrane proteins in transit. Also forms a complex composed of TIMM9, TIMM10/TIM10A and FXC1/TIM10B.

It localises to the mitochondrion inner membrane. Functionally, mitochondrial intermembrane chaperone that participates in the import and insertion of multi-pass transmembrane proteins into the mitochondrial inner membrane. May also be required for the transfer of beta-barrel precursors from the TOM complex to the sorting and assembly machinery (SAM complex) of the outer membrane. Acts as a chaperone-like protein that protects the hydrophobic precursors from aggregation and guide them through the mitochondrial intermembrane space. The protein is Mitochondrial import inner membrane translocase subunit Tim9 (Timm9) of Rattus norvegicus (Rat).